The sequence spans 334 residues: Chemotactic signal transduction system substrate-binding protein CosB (334 aa).

A signal peptide spans 1–29 (MMDTPEHASTSSRRQLLGMLAAGGTTAVA).

The protein belongs to the OsmX family.

Its subcellular location is the cell membrane. Its function is as follows. Mediates chemotaxis towards compatible osmolytes. May function as a receptor that binds the osmolytes and transduces a signal to CosT. Has probably no additional role in transport. The sequence is that of Chemotactic signal transduction system substrate-binding protein CosB (cosB) from Halobacterium salinarum (strain ATCC 29341 / DSM 671 / R1).